The following is a 237-amino-acid chain: Phosphatidylserine decarboxylase proenzyme (237 aa).

S206 serves as the catalytic Schiff-base intermediate with substrate; via pyruvic acid. A Pyruvic acid (Ser); by autocatalysis modification is found at S206.

The protein belongs to the phosphatidylserine decarboxylase family. PSD-A subfamily. As to quaternary structure, heterodimer of a large membrane-associated beta subunit and a small pyruvoyl-containing alpha subunit. It depends on pyruvate as a cofactor. Is synthesized initially as an inactive proenzyme. Formation of the active enzyme involves a self-maturation process in which the active site pyruvoyl group is generated from an internal serine residue via an autocatalytic post-translational modification. Two non-identical subunits are generated from the proenzyme in this reaction, and the pyruvate is formed at the N-terminus of the alpha chain, which is derived from the carboxyl end of the proenzyme. The post-translation cleavage follows an unusual pathway, termed non-hydrolytic serinolysis, in which the side chain hydroxyl group of the serine supplies its oxygen atom to form the C-terminus of the beta chain, while the remainder of the serine residue undergoes an oxidative deamination to produce ammonia and the pyruvoyl prosthetic group on the alpha chain.

It is found in the cell membrane. It carries out the reaction a 1,2-diacyl-sn-glycero-3-phospho-L-serine + H(+) = a 1,2-diacyl-sn-glycero-3-phosphoethanolamine + CO2. It participates in phospholipid metabolism; phosphatidylethanolamine biosynthesis; phosphatidylethanolamine from CDP-diacylglycerol: step 2/2. In terms of biological role, catalyzes the formation of phosphatidylethanolamine (PtdEtn) from phosphatidylserine (PtdSer). The sequence is that of Phosphatidylserine decarboxylase proenzyme from Rhodococcus opacus (strain B4).